A 705-amino-acid polypeptide reads, in one-letter code: Beta-xylosidase (705 aa).

This sequence belongs to the glycosyl hydrolase 52 family.

The enzyme catalyses Hydrolysis of (1-&gt;4)-beta-D-xylans, to remove successive D-xylose residues from the non-reducing termini.. Its pathway is glycan degradation; xylan degradation. In Geobacillus stearothermophilus (Bacillus stearothermophilus), this protein is Beta-xylosidase (xylA).